Consider the following 872-residue polypeptide: DNA mismatch repair protein MutS (872 aa).

626–633 (GPNMAGKS) is an ATP binding site.

It belongs to the DNA mismatch repair MutS family.

Functionally, this protein is involved in the repair of mismatches in DNA. It is possible that it carries out the mismatch recognition step. This protein has a weak ATPase activity. This chain is DNA mismatch repair protein MutS, found in Chlorobium phaeobacteroides (strain DSM 266 / SMG 266 / 2430).